The chain runs to 167 residues: Ubiquitin-conjugating enzyme E2 14 (167 aa).

Position 2 is an N-acetylalanine (Ala2). A UBC core domain is found at 5-165 (QASLLLQKQL…VSRCVRRSQE (161 aa)). Cys90 (glycyl thioester intermediate) is an active-site residue.

It belongs to the ubiquitin-conjugating enzyme family.

It carries out the reaction S-ubiquitinyl-[E1 ubiquitin-activating enzyme]-L-cysteine + [E2 ubiquitin-conjugating enzyme]-L-cysteine = [E1 ubiquitin-activating enzyme]-L-cysteine + S-ubiquitinyl-[E2 ubiquitin-conjugating enzyme]-L-cysteine.. The protein operates within protein modification; protein ubiquitination. Its function is as follows. Accepts the ubiquitin from the E1 complex and catalyzes its covalent attachment to other proteins. Involved in the formation of multiubiquitin chains. Signal the protein for selective degradation. The chain is Ubiquitin-conjugating enzyme E2 14 (UBC14) from Arabidopsis thaliana (Mouse-ear cress).